The primary structure comprises 179 residues: MVKLVVGIGNPGRQYVWTRHNIGFLFLDMLASRFSGAFREAPRLFSSFMKVETSCGVIVLIKPSTYVNLTGKAVLAAKRFFGVSVEGILIVADDINREFGSIRFRQDCGAGGHNGLKNTTQVLQSNHYWQLRLGVGRPSNPESEGVADYVLSNFSFNERKSLNGFFEKGIEEISPWLGF.

Y15 is a binding site for tRNA. H20 serves as the catalytic Proton acceptor. Residues Y66, N68, and N114 each contribute to the tRNA site.

The protein belongs to the PTH family. As to quaternary structure, monomer.

The protein localises to the cytoplasm. The enzyme catalyses an N-acyl-L-alpha-aminoacyl-tRNA + H2O = an N-acyl-L-amino acid + a tRNA + H(+). In terms of biological role, hydrolyzes ribosome-free peptidyl-tRNAs (with 1 or more amino acids incorporated), which drop off the ribosome during protein synthesis, or as a result of ribosome stalling. Catalyzes the release of premature peptidyl moieties from peptidyl-tRNA molecules trapped in stalled 50S ribosomal subunits, and thus maintains levels of free tRNAs and 50S ribosomes. The sequence is that of Peptidyl-tRNA hydrolase from Chlamydia muridarum (strain MoPn / Nigg).